We begin with the raw amino-acid sequence, 508 residues long: Probable cytosol aminopeptidase (508 aa).

Mn(2+) contacts are provided by Lys274 and Asp279. Residue Lys286 is part of the active site. 3 residues coordinate Mn(2+): Asp297, Asp356, and Glu358. Residue Arg360 is part of the active site.

The protein belongs to the peptidase M17 family. Mn(2+) serves as cofactor.

Its subcellular location is the cytoplasm. It catalyses the reaction Release of an N-terminal amino acid, Xaa-|-Yaa-, in which Xaa is preferably Leu, but may be other amino acids including Pro although not Arg or Lys, and Yaa may be Pro. Amino acid amides and methyl esters are also readily hydrolyzed, but rates on arylamides are exceedingly low.. It carries out the reaction Release of an N-terminal amino acid, preferentially leucine, but not glutamic or aspartic acids.. In terms of biological role, presumably involved in the processing and regular turnover of intracellular proteins. Catalyzes the removal of unsubstituted N-terminal amino acids from various peptides. In Paraburkholderia xenovorans (strain LB400), this protein is Probable cytosol aminopeptidase.